Here is a 615-residue protein sequence, read N- to C-terminus: Dehydrogenase str4 (615 aa).

FAD-binding positions include 45–46, 66–67, and 123–126; these read TA, EA, and NGSM. Catalysis depends on H552, which acts as the Proton acceptor. Residues A585 and 596-597 contribute to the FAD site; that span reads PA.

It belongs to the GMC oxidoreductase family. In terms of assembly, homodimer. Requires FAD as cofactor.

It functions in the pathway mycotoxin biosynthesis. Dehydrogenase; part of the gene cluster that mediates the biosynthesis of strobilurin A, an antifungal polyketide that contains a key beta-methoxyacrylate toxophore that targets the complex III of the mitochondrial electron transport chain. Strobilurin biosynthesis begins with construction of benzoyl CoA by step-wise elimination of ammonia from phenylalanine by the phenylalanine ammonia-lyase str11, oxygenation by str8 and retro-Claisen reaction to form benzoic acid, which is activated to its CoA thiolester benzoyl CoA by the dedicated CoA ligase str10. Benzoyl CoA forms the starter unit for the highly reducing polyketide synthase stpks1 that produces the polyketide prestrobilutin A. The FAD-dependent oxygenase str9 then catalyzes the key oxidative rearrangement responsible for the creation of the beta-methoxyacrylate toxophore. Str9 performs epoxidation of the 2,3 olefin of prestrobilutin A, followed by Meinwald rearrangement to furnish the aldehyde intermediate. Rapid enolization of the aldehyde intermediate would give the beta-methoxyacrylate skeleton and methylations catalyzed by str2 and str3 complete the synthesis and lead to the production of strobilurin A. The short-chain dehydrogenase stl2 and the dehydrogenase str4 play a role in the shunt pathway leading to the production of bolineol. The cluster encodes no obvious halogenase gene that could be involved in production of strobilurin B, nor any obvious dimethylallyl-transferase that could be involved in the production of strobilurin G. It is possible that unknown proteins encoded in, or near, the cluster (such as str1 or stl1) may form new classes of halogenases or dimethylally-transferases, or that the responsible genes are located elsewhere on the genome. Similarly, proteins encoded by str5/str6 hydrolases appear to have no chemical role in the biosynthesis of strobilurin A. Finally, no obvious self-resistance gene is found within the cluster. The polypeptide is Dehydrogenase str4 (Strobilurus tenacellus).